A 382-amino-acid chain; its full sequence is UDP-N-acetylglucosamine--N-acetylmuramyl-(pentapeptide) pyrophosphoryl-undecaprenol N-acetylglucosamine transferase (382 aa).

Residues 17–19 (TAG), Asn-137, Arg-179, Ser-213, and Gln-308 contribute to the UDP-N-acetyl-alpha-D-glucosamine site.

This sequence belongs to the glycosyltransferase 28 family. MurG subfamily.

The protein localises to the cell membrane. It carries out the reaction di-trans,octa-cis-undecaprenyl diphospho-N-acetyl-alpha-D-muramoyl-L-alanyl-D-glutamyl-meso-2,6-diaminopimeloyl-D-alanyl-D-alanine + UDP-N-acetyl-alpha-D-glucosamine = di-trans,octa-cis-undecaprenyl diphospho-[N-acetyl-alpha-D-glucosaminyl-(1-&gt;4)]-N-acetyl-alpha-D-muramoyl-L-alanyl-D-glutamyl-meso-2,6-diaminopimeloyl-D-alanyl-D-alanine + UDP + H(+). The protein operates within cell wall biogenesis; peptidoglycan biosynthesis. Functionally, cell wall formation. Catalyzes the transfer of a GlcNAc subunit on undecaprenyl-pyrophosphoryl-MurNAc-pentapeptide (lipid intermediate I) to form undecaprenyl-pyrophosphoryl-MurNAc-(pentapeptide)GlcNAc (lipid intermediate II). This is UDP-N-acetylglucosamine--N-acetylmuramyl-(pentapeptide) pyrophosphoryl-undecaprenol N-acetylglucosamine transferase from Rhodococcus jostii (strain RHA1).